A 736-amino-acid chain; its full sequence is MSNDCTCPVTGRVDKPIASSGRANRDWWPHQLNLKILHQNPPLGNPMGEEFSYAEEFKKLDLEALKKDLYALMTDSQEWWPADYGHYGGLFIRMAWHSAGTYRTGDGRGGGGSGSQRFAPLNSWPDNVNLDKARRLLWPIKQKYGRKISWADLMILAGNCALESMGFKTFGFGGGREDIWEPEEDIYWGSEAEWLATSDKPKSRYSGDRDLENPLAAVQMGLIYVNPEGPDGNPDPVASGRDVRETFGRMAMNDEETVALVAGGHTFGKCHGAGPATHVGPEPEAAPIEEQGLGWKSSFRSGKGGDTIGSGIEGAWKPNPTTWDMGYLKVLFKYEWELVKSPAGANQWLAKDVDEEDMVVDAHDPSKKHRPMMTTADLSLRFDPIYEPIARDYQQNPEKFADAFARAWFKLTHRDMGPRSRYLGAEVPAEELIWQDPVPTVDHQLIDGQDIAALKDTILASGLSVSQLVSTAWASASTFRGSDKRGGANGGRIRLAPQKDWEVNQPAQLKTVLQTLERIQKEYNDAQSGGKRVSLADLIVLGGCAGIEQAAKNAGQAVSVPFTPGRTDATQEQTDVASFAVLEPAADGFRNYLKTRYTVSAEELLVDRAQLLTLTAPEMTVLLGGMRVLNANYGQSRHGVFTKRPETLTNDFFLNLLDMGTVWKATSEAGDLFEGRDHTSGELKWTATRVDLIFGSNSQLRALAEVYGSGDSQEKFLHDFVAVWEKVMNLDRFDLA.

The tryptophyl-tyrosyl-methioninium (Trp-Tyr) (with M-250) cross-link spans 96 to 224; it reads WHSAGTYRTG…LAAVQMGLIY (129 aa). The active-site Proton acceptor is the His97. The tryptophyl-tyrosyl-methioninium (Tyr-Met) (with W-96) cross-link spans 224–250; sequence YVNPEGPDGNPDPVASGRDVRETFGRM. His265 is a heme b binding site.

This sequence belongs to the peroxidase family. Peroxidase/catalase subfamily. Homodimer or homotetramer. Heme b is required as a cofactor. Formation of the three residue Trp-Tyr-Met cross-link is important for the catalase, but not the peroxidase activity of the enzyme.

It catalyses the reaction H2O2 + AH2 = A + 2 H2O. The catalysed reaction is 2 H2O2 = O2 + 2 H2O. Its function is as follows. Bifunctional enzyme with both catalase and broad-spectrum peroxidase activity. The sequence is that of Catalase-peroxidase from Pelobacter propionicus (strain DSM 2379 / NBRC 103807 / OttBd1).